A 421-amino-acid polypeptide reads, in one-letter code: 3-isopropylmalate dehydratase large subunit (421 aa).

Cys-302, Cys-362, and Cys-365 together coordinate [4Fe-4S] cluster.

It belongs to the aconitase/IPM isomerase family. LeuC type 2 subfamily. As to quaternary structure, heterodimer of LeuC and LeuD. Requires [4Fe-4S] cluster as cofactor.

The catalysed reaction is (2R,3S)-3-isopropylmalate = (2S)-2-isopropylmalate. It participates in amino-acid biosynthesis; L-leucine biosynthesis; L-leucine from 3-methyl-2-oxobutanoate: step 2/4. In terms of biological role, catalyzes the isomerization between 2-isopropylmalate and 3-isopropylmalate, via the formation of 2-isopropylmaleate. The sequence is that of 3-isopropylmalate dehydratase large subunit from Campylobacter curvus (strain 525.92).